The sequence spans 454 residues: Phosphoglucosamine mutase (454 aa).

The active-site Phosphoserine intermediate is Ser-102. Mg(2+)-binding residues include Ser-102, Asp-247, Asp-249, and Asp-251. Ser-102 carries the phosphoserine modification.

It belongs to the phosphohexose mutase family. Mg(2+) serves as cofactor. Post-translationally, activated by phosphorylation.

It carries out the reaction alpha-D-glucosamine 1-phosphate = D-glucosamine 6-phosphate. Functionally, catalyzes the conversion of glucosamine-6-phosphate to glucosamine-1-phosphate. This chain is Phosphoglucosamine mutase, found in Kineococcus radiotolerans (strain ATCC BAA-149 / DSM 14245 / SRS30216).